Here is a 155-residue protein sequence, read N- to C-terminus: Large ribosomal subunit protein uL30 (155 aa).

The protein belongs to the universal ribosomal protein uL30 family. Part of the 50S ribosomal subunit.

The sequence is that of Large ribosomal subunit protein uL30 from Pyrococcus horikoshii (strain ATCC 700860 / DSM 12428 / JCM 9974 / NBRC 100139 / OT-3).